Reading from the N-terminus, the 583-residue chain is MKLLHVFLLFLCFHLRFCKVTYTSQEDLVEKKCLAKKYTHLSCDKVFCQPWQRCIEGTCVCKLPYQCPKNGTAVCATNRRSFPTYCQQKSLECLHPGTKFLNNGTCTAEGKFSVSLKHGNTDSEGIVEVKLVDQDKTMFICKSSWSMREANVACLDLGFQQGADTQRRFKLSDLSINSTECLHVHCRGLETSLAECTFTKRRTMGYQDFADVVCYTQKADSPMDDFFQCVNGKYISQMKACDGINDCGDQSDELCCKACQGKGFHCKSGVCIPSQYQCNGEVDCITGEDEVGCAGFASVTQEETEILTADMDAERRRIKSLLPKLSCGVKNRMHIRRKRIVGGKRAQLGDLPWQVAIKDASGITCGGIYIGGCWILTAAHCLRASKTHRYQIWTTVVDWIHPDLKRIVIEYVDRIIFHENYNAGTYQNDIALIEMKKDGNKKDCELPRSIPACVPWSPYLFQPNDTCIVSGWGREKDNERVFSLQWGEVKLISNCSKFYGNRFYEKEMECAGTYDGSIDACKGDSGGPLVCMDANNVTYVWGVVSWGENCGKPEFPGVYTKVANYFDWISYHVGRPFISQYNV.

A signal peptide spans 1–18 (MKLLHVFLLFLCFHLRFC). Cystine bridges form between cysteine 33–cysteine 255, cysteine 43–cysteine 54, cysteine 48–cysteine 59, cysteine 61–cysteine 93, cysteine 67–cysteine 86, cysteine 75–cysteine 106, cysteine 141–cysteine 181, cysteine 154–cysteine 214, cysteine 186–cysteine 196, cysteine 229–cysteine 247, cysteine 241–cysteine 256, cysteine 259–cysteine 271, cysteine 266–cysteine 284, cysteine 278–cysteine 293, cysteine 327–cysteine 453, cysteine 365–cysteine 381, and cysteine 373–cysteine 444. Positions 55 to 108 (IEGTCVCKLPYQCPKNGTAVCATNRRSFPTYCQQKSLECLHPGTKFLNNGTCTA) constitute a Kazal-like domain. The N-linked (GlcNAc...) asparagine glycan is linked to asparagine 70. An N-linked (GlcNAc...) (complex) asparagine glycan is attached at asparagine 103. The region spanning 114–212 (VSLKHGNTDS…TMGYQDFADV (99 aa)) is the SRCR domain. A glycan (N-linked (GlcNAc...) asparagine) is linked at asparagine 177. LDL-receptor class A domains lie at 213-257 (VCYT…LCCK) and 258-294 (ACQG…VGCA). 6 residues coordinate Ca(2+): lysine 239, aspartate 242, isoleucine 244, aspartate 246, aspartate 252, and glutamate 253. Tyrosine 276, asparagine 279, glutamate 281, aspartate 283, aspartate 289, and glutamate 290 together coordinate Ca(2+). Residues 340–574 (IVGGKRAQLG…YFDWISYHVG (235 aa)) enclose the Peptidase S1 domain. Active-site charge relay system residues include histidine 380 and aspartate 429. N-linked (GlcNAc...) asparagine glycosylation is found at asparagine 464 and asparagine 494. Intrachain disulfides connect cysteine 467–cysteine 531, cysteine 495–cysteine 510, and cysteine 521–cysteine 550. Catalysis depends on serine 525, which acts as the Charge relay system. Asparagine 536 carries N-linked (GlcNAc...) asparagine glycosylation.

Belongs to the peptidase S1 family. As to quaternary structure, heterodimer of a light and heavy chains; disulfide-linked. The fully processed and mature protein circulates as a zymogen, and is allosterically activated by substrate-induced remodeling of the active site. Interacts with C3b. Interacts with complement factor H. (Microbial infection) Interacts with Staphylococcus aureus clumping factor A/ClfA; this interaction enhances cleavage of C3b into iC3b by CFI. In terms of tissue distribution, expressed in the liver by hepatocytes. Also present in other cells such as monocytes, fibroblasts or keratinocytes.

It localises to the secreted. The protein localises to the extracellular space. The catalysed reaction is Inactivates complement subcomponents C3b, iC3b and C4b by proteolytic cleavage.. In terms of biological role, trypsin-like serine protease that plays an essential role in regulating the immune response by controlling all complement pathways. Inhibits these pathways by cleaving three peptide bonds in the alpha-chain of C3b and two bonds in the alpha-chain of C4b thereby inactivating these proteins. Essential cofactors for these reactions include factor H and C4BP in the fluid phase and membrane cofactor protein/CD46 and CR1 on cell surfaces. The presence of these cofactors on healthy cells allows degradation of deposited C3b by CFI in order to prevent undesired complement activation, while in apoptotic cells or microbes, the absence of such cofactors leads to C3b-mediated complement activation and subsequent opsonization. This chain is Complement factor I (CFI), found in Homo sapiens (Human).